The chain runs to 190 residues: Lipid A acyltransferase PagP (190 aa).

The first 18 residues, 1-18 (MKRLISCLTIICALNASA), serve as a signal peptide directing secretion. Active-site residues include histidine 60, aspartate 103, and serine 104.

Belongs to the lipid A palmitoyltransferase family. In terms of assembly, homodimer.

Its subcellular location is the cell outer membrane. It catalyses the reaction a lipid A + a 1,2-diacyl-sn-glycero-3-phosphocholine = a hepta-acyl lipid A + a 2-acyl-sn-glycero-3-phosphocholine. The enzyme catalyses a lipid IVA + a 1,2-diacyl-sn-glycero-3-phosphocholine = a lipid IVB + a 2-acyl-sn-glycero-3-phosphocholine. The catalysed reaction is a lipid IIA + a 1,2-diacyl-sn-glycero-3-phosphocholine = a lipid IIB + a 2-acyl-sn-glycero-3-phosphocholine. Transfers a fatty acid residue from the sn-1 position of a phospholipid to the N-linked hydroxyfatty acid chain on the proximal unit of lipid A or its precursors. This Legionella pneumophila subsp. pneumophila (strain Philadelphia 1 / ATCC 33152 / DSM 7513) protein is Lipid A acyltransferase PagP.